The chain runs to 944 residues: Tyrosine-protein kinase transmembrane receptor ROR2 (944 aa).

An N-terminal signal peptide occupies residues 1–33 (MARGWVRPSRVPLCARAVWTAAALLLWTPWTAG). Residues 34–403 (EVEDSEAIDT…CSPRDGSKMG (370 aa)) lie on the Extracellular side of the membrane. Residues 55-145 (PTLKGYFLNF…VATNGLKTIT (91 aa)) enclose the Ig-like C2-type domain. An N-linked (GlcNAc...) asparagine glycan is attached at Asn-70. 9 disulfide bridges follow: Cys-83–Cys-135, Cys-174–Cys-239, Cys-182–Cys-232, Cys-223–Cys-264, Cys-252–Cys-300, Cys-256–Cys-286, Cys-316–Cys-394, Cys-337–Cys-377, and Cys-365–Cys-389. Positions 169–303 (QEDGFCQPYR…SPDAANCMRI (135 aa)) constitute an FZ domain. Asn-188 is a glycosylation site (N-linked (GlcNAc...) asparagine). Residues 316 to 394 (CYNGSGADYR…RVELCDVPPC (79 aa)) enclose the Kringle domain. Asn-318 carries an N-linked (GlcNAc...) asparagine glycan. Residues 404-424 (ILYILVPSIAIPLVIACLFFL) traverse the membrane as a helical segment. The Cytoplasmic portion of the chain corresponds to 425–944 (VCMCRNKQKA…TEAAHVQLEA (520 aa)). The region spanning 473–746 (VRFMEELGED…PRFKDIHSRL (274 aa)) is the Protein kinase domain. Residues 479–487 (LGEDRFGKV) and Lys-507 each bind ATP. Asp-615 functions as the Proton acceptor in the catalytic mechanism. A Phosphotyrosine; by autocatalysis modification is found at Tyr-646. A disordered region spans residues 757–779 (SSAQTSGASNTTQTSSLSTSPVS). A compositionally biased stretch (low complexity) spans 765-779 (SNTTQTSSLSTSPVS). Arg-785 is modified (asymmetric dimethylarginine). Disordered stretches follow at residues 850-879 (QVPP…TAPS) and 898-929 (QNIA…LGDN). The segment covering 857 to 872 (PKPSSHHSGSGSTSTG) has biased composition (low complexity).

Belongs to the protein kinase superfamily. Tyr protein kinase family. ROR subfamily. In terms of assembly, homodimer; promotes osteogenesis. Binds YWHAB. Interacts with WTIP. Interacts with ROR2. The cofactor is Mg(2+).

It localises to the cell membrane. The catalysed reaction is L-tyrosyl-[protein] + ATP = O-phospho-L-tyrosyl-[protein] + ADP + H(+). Tyrosine-protein kinase receptor which may be involved in the early formation of the chondrocytes. It seems to be required for cartilage and growth plate development. Phosphorylates YWHAB, leading to induction of osteogenesis and bone formation. In contrast, has also been shown to have very little tyrosine kinase activity in vitro. May act as a receptor for wnt ligand WNT5A which may result in the inhibition of WNT3A-mediated signaling. The sequence is that of Tyrosine-protein kinase transmembrane receptor ROR2 (Ror2) from Mus musculus (Mouse).